The chain runs to 386 residues: MKKLFNQVLVAAGVLALLAGCASEEENVIMAPLPIVKSEFTPKTLWSASVGDGVGHYFSKLAPDYAYDKVFVASRDGVVKALDPQNGKVIWTTDLEIEGSARLSGGITAAFGKLFIGSENGVVNALDAETGEPLWASAIEGEVLAAPAADNNIVIVNTSRGALIALNQEDGAQKWTISTEVPNLTLRGDSRPTAVAGGVFWGTPSGRLAAAIAERGQLIWQQPVGQPKGATEIDRLVDVDASPLVIGGTLFTVGFNGQLIAIDLRSGQPIWKRNYSSATDMATDGSRLYLVTDKDHLVAVDTRSGTELWSNTQLEHRLLTAPKMIDDYLVVGDAEGYLHWIDRNSGEFIAQQLVNDSGFAVGPLALNDGYVIVTRNGQIKKLTIQQ.

The signal sequence occupies residues methionine 1–glycine 20. Cysteine 21 carries the N-palmitoyl cysteine lipid modification. The S-diacylglycerol cysteine moiety is linked to residue cysteine 21.

It belongs to the BamB family. Part of the Bam complex.

It is found in the cell outer membrane. Functionally, part of the outer membrane protein assembly complex, which is involved in assembly and insertion of beta-barrel proteins into the outer membrane. The chain is Outer membrane protein assembly factor BamB from Vibrio cholerae serotype O1 (strain ATCC 39315 / El Tor Inaba N16961).